The chain runs to 401 residues: Homeobox protein engrailed-1 (401 aa).

Disordered stretches follow at residues 1-102 (MEEQ…PAAQ), 138-167 (GGGAAAGGGSRVERDRGQTGAGRDPVHSLG), 229-253 (SKPSDSGGGSGGNAGSPGAQGAKFP), and 293-315 (RPSSGPRTRKLKKKKNEKEDKRP). Low complexity predominate over residues 13-48 (DSGLGAVAAAAPSGLSLSLSPGASGSSGSDGDSVPV). Composition is skewed to pro residues over residues 49–64 (SPQPAPPSPPAAPCLP) and 73–88 (PPHPPPPPPPPPPPPQ). A compositionally biased stretch (low complexity) spans 89-102 (HLAAPAHQPQPAAQ). Gly residues-rich tracts occupy residues 138–147 (GGGAAAGGGS) and 234–243 (SGGGSGGNAG). The homeobox DNA-binding region spans 312–371 (DKRPRTAFTAEQLQRLKAEFQANRYITEQRRQTLAQELSLNESQIKIWFQNKRAKIKKAT).

The protein belongs to the engrailed homeobox family.

It localises to the nucleus. Functionally, required for proper formation of the apical ectodermal ridge and correct dorsal-ventral patterning in the limb. The sequence is that of Homeobox protein engrailed-1 (En1) from Mus musculus (Mouse).